A 203-amino-acid chain; its full sequence is Endothelin-1 (203 aa).

A signal peptide spans 1–25 (MDYFPMIIALLFVAFQGAPETAVLG). Positions 26-50 (AELSPEAESQGETPSPHASWRPRRS) are excised as a propeptide. Residues 27-48 (ELSPEAESQGETPSPHASWRPR) are disordered. Cystine bridges form between C53–C67 and C55–C63. Positions 83–203 (YGLGSPSRSR…DKKVTHNRTH (121 aa)) are excised as a propeptide. The tract at residues 110 to 124 (CQCASQKDKKCWSFC) is endothelin-like. A glycan (N-linked (GlcNAc...) asparagine) is linked at N200.

The protein belongs to the endothelin/sarafotoxin family.

It localises to the secreted. In terms of biological role, endothelins are endothelium-derived vasoconstrictor peptides. Probable ligand for G-protein coupled receptors EDNRA and EDNRB which activates PTK2B, BCAR1, BCAR3 and, GTPases RAP1 and RHOA cascade in glomerular mesangial cells. Also binds the DEAR/FBXW7-AS1 receptor. Promotes mesenteric arterial wall remodeling via activation of ROCK signaling and subsequent colocalization of NFATC3 with F-actin filaments. NFATC3 then translocates to the nucleus where it subsequently promotes the transcription of the smooth muscle hypertrophy and differentiation marker ACTA2. This Sus scrofa (Pig) protein is Endothelin-1 (EDN1).